The sequence spans 313 residues: tRNA pseudouridine synthase B (313 aa).

The Nucleophile role is filled by Asp48.

The protein belongs to the pseudouridine synthase TruB family. Type 1 subfamily.

The catalysed reaction is uridine(55) in tRNA = pseudouridine(55) in tRNA. Functionally, responsible for synthesis of pseudouridine from uracil-55 in the psi GC loop of transfer RNAs. This is tRNA pseudouridine synthase B from Saccharophagus degradans (strain 2-40 / ATCC 43961 / DSM 17024).